The primary structure comprises 283 residues: Shikimate dehydrogenase (NADP(+)) (283 aa).

Residues 19–21 (SFS) and T66 contribute to the shikimate site. K70 acts as the Proton acceptor in catalysis. E82 serves as a coordination point for NADP(+). Shikimate contacts are provided by N91 and D106. NADP(+)-binding positions include 129–133 (GAGGA) and I225. Y227 is a shikimate binding site. Position 248 (G248) interacts with NADP(+).

The protein belongs to the shikimate dehydrogenase family. As to quaternary structure, homodimer.

The catalysed reaction is shikimate + NADP(+) = 3-dehydroshikimate + NADPH + H(+). The protein operates within metabolic intermediate biosynthesis; chorismate biosynthesis; chorismate from D-erythrose 4-phosphate and phosphoenolpyruvate: step 4/7. Its function is as follows. Involved in the biosynthesis of the chorismate, which leads to the biosynthesis of aromatic amino acids. Catalyzes the reversible NADPH linked reduction of 3-dehydroshikimate (DHSA) to yield shikimate (SA). The polypeptide is Shikimate dehydrogenase (NADP(+)) (Methanosphaera stadtmanae (strain ATCC 43021 / DSM 3091 / JCM 11832 / MCB-3)).